Reading from the N-terminus, the 188-residue chain is Peptidyl-tRNA hydrolase (188 aa).

Residue Tyr-16 coordinates tRNA. His-21 serves as the catalytic Proton acceptor. The tRNA site is built by Phe-66, Asn-68, and Asn-114.

Belongs to the PTH family. As to quaternary structure, monomer.

Its subcellular location is the cytoplasm. It carries out the reaction an N-acyl-L-alpha-aminoacyl-tRNA + H2O = an N-acyl-L-amino acid + a tRNA + H(+). In terms of biological role, hydrolyzes ribosome-free peptidyl-tRNAs (with 1 or more amino acids incorporated), which drop off the ribosome during protein synthesis, or as a result of ribosome stalling. Its function is as follows. Catalyzes the release of premature peptidyl moieties from peptidyl-tRNA molecules trapped in stalled 50S ribosomal subunits, and thus maintains levels of free tRNAs and 50S ribosomes. The polypeptide is Peptidyl-tRNA hydrolase (Citrifermentans bemidjiense (strain ATCC BAA-1014 / DSM 16622 / JCM 12645 / Bem) (Geobacter bemidjiensis)).